The chain runs to 217 residues: Probable transaldolase (217 aa).

Catalysis depends on lysine 85, which acts as the Schiff-base intermediate with substrate.

This sequence belongs to the transaldolase family. Type 3B subfamily.

The protein resides in the cytoplasm. It carries out the reaction D-sedoheptulose 7-phosphate + D-glyceraldehyde 3-phosphate = D-erythrose 4-phosphate + beta-D-fructose 6-phosphate. The protein operates within carbohydrate degradation; pentose phosphate pathway; D-glyceraldehyde 3-phosphate and beta-D-fructose 6-phosphate from D-ribose 5-phosphate and D-xylulose 5-phosphate (non-oxidative stage): step 2/3. Its function is as follows. Transaldolase is important for the balance of metabolites in the pentose-phosphate pathway. This Agathobacter rectalis (strain ATCC 33656 / DSM 3377 / JCM 17463 / KCTC 5835 / VPI 0990) (Eubacterium rectale) protein is Probable transaldolase.